The primary structure comprises 450 residues: Adenosylhomocysteinase (450 aa).

Residues Thr59, Asp135, and Glu160 each coordinate substrate. 161 to 163 is a binding site for NAD(+); that stretch reads TTT. The substrate site is built by Lys190 and Asp194. Residues Asn195, 224 to 229, Glu247, 303 to 305, and Asn350 each bind NAD(+); these read GFGDVG and IGH.

The protein belongs to the adenosylhomocysteinase family. Requires NAD(+) as cofactor.

The protein resides in the cytoplasm. It catalyses the reaction S-adenosyl-L-homocysteine + H2O = L-homocysteine + adenosine. It functions in the pathway amino-acid biosynthesis; L-homocysteine biosynthesis; L-homocysteine from S-adenosyl-L-homocysteine: step 1/1. Functionally, adenosylhomocysteine is a competitive inhibitor of S-adenosyl-L-methionine-dependent methyl transferase reactions; therefore adenosylhomocysteinase may play a key role in the control of methylations via regulation of the intracellular concentration of adenosylhomocysteine. The protein is Adenosylhomocysteinase (SAH1) of Candida albicans (strain SC5314 / ATCC MYA-2876) (Yeast).